The chain runs to 176 residues: Transmembrane protein 238 (176 aa).

The disordered stretch occupies residues 1-22 (MAAAPAVCASQGSPPGAPSAPA). The Cytoplasmic portion of the chain corresponds to 1–36 (MAAAPAVCASQGSPPGAPSAPAAAPAPAAGLGRCRM). The segment covering 9 to 22 (ASQGSPPGAPSAPA) has biased composition (low complexity). Residues 37–57 (ALLLAVALDVAGMAALLTGVF) form a helical membrane-spanning segment. The Extracellular portion of the chain corresponds to 58 to 69 (AQLQVRGRDFGD). A helical membrane pass occupies residues 70-90 (LLIYSGALLVFLSLLGWILWY). At 91-176 (TGNIEISRQE…GPGAAGAGSE (86 aa)) the chain is on the cytoplasmic side. Residues 124–137 (SAPAAAGQRPAPGS) show a composition bias toward low complexity. The disordered stretch occupies residues 124 to 157 (SAPAAAGQRPAPGSRRARRAARAPPPPAAGSRRV). A Phosphoserine modification is found at Ser175.

It is found in the membrane. This Homo sapiens (Human) protein is Transmembrane protein 238 (TMEM238).